The chain runs to 117 residues: MSAGSSCSQTPSRAIPTRRVALGDGVQLPPGDYSTTPGGTLFSTTPGGTRIIYDRKFLMECRNSPVAKTPPKDLPAIPGVTSPTSDEPPMQASQSQLPSSPEDKRAGGEESQFEMDI.

2 stretches are compositionally biased toward polar residues: residues M1–S12 and Y33–G47. A disordered region spans residues M1 to G47. S2 bears the N-acetylserine mark. Residues T36 and T40 each carry the phosphothreonine modification. S43 carries the phosphoserine modification. Phosphothreonine is present on residues T45 and T49. Phosphotyrosine is present on Y53. The short motif at Y53–M59 is the YXXXXLphi motif element. K56 is covalently cross-linked (Glycyl lysine isopeptide (Lys-Gly) (interchain with G-Cter in ubiquitin)). S64 carries the post-translational modification Phosphoserine. A disordered region spans residues S64 to I117. T69 is modified (phosphothreonine). Residues T81–S99 are compositionally biased toward polar residues. Phosphoserine is present on residues S82, S95, S99, S100, and S111. The TOS motif motif lies at F113 to I117.

This sequence belongs to the eIF4E-binding protein family. In terms of assembly, hypophosphorylated EIF4EBP1 competes with EIF4G1/EIF4G3 to interact with EIF4E; insulin stimulated MAP-kinase (MAPK1 and MAPK3) or mTORC1 phosphorylation of EIF4EBP1 causes dissociation of the complex allowing EIF4G1/EIF4G3 to bind and consequent initiation of translation. Interacts (via TOS motif) with RPTOR; promoting phosphorylation by mTORC1. Post-translationally, phosphorylated on serine and threonine residues in response to insulin, EGF and PDGF. Phosphorylation at Thr-36, Thr-45, Ser-64 and Thr-69, corresponding to the hyperphosphorylated form, is regulated by mTORC1 and abolishes binding to EIF4E. Ubiquitinated: when eIF4E levels are low, hypophosphorylated form is ubiquitinated by the BCR(KLHL25) complex, leading to its degradation and serving as a homeostatic mechanism to maintain translation and prevent eIF4E inhibition when eIF4E levels are low. Not ubiquitinated when hyperphosphorylated (at Thr-36, Thr-45, Ser-64 and Thr-69) or associated with eIF4E. In terms of tissue distribution, highest expression in fat cells.

It is found in the cytoplasm. The protein resides in the nucleus. Functionally, repressor of translation initiation that regulates EIF4E activity by preventing its assembly into the eIF4F complex: hypophosphorylated form competes with EIF4G1/EIF4G3 and strongly binds to EIF4E, leading to repress translation. In contrast, hyperphosphorylated form dissociates from EIF4E, allowing interaction between EIF4G1/EIF4G3 and EIF4E, leading to initiation of translation. Mediates the regulation of protein translation by hormones, growth factors and other stimuli that signal through the MAP kinase and mTORC1 pathways. The sequence is that of Eukaryotic translation initiation factor 4E-binding protein 1 (Eif4ebp1) from Mus musculus (Mouse).